We begin with the raw amino-acid sequence, 508 residues long: UTP--glucose-1-phosphate uridylyltransferase (508 aa).

The residue at position 13 (S13) is a Phosphoserine. Residues 113–116 (LNGG), K127, Q190, and G222 each bind UTP. Position 115–116 (115–116 (GG)) interacts with substrate. K127 is a binding site for Mg(2+). Substrate contacts are provided by residues H223 and 251–253 (NID). Residues D253 and K396 each contribute to the UTP site. D253 is a Mg(2+) binding site. K396 is a catalytic residue. T426 bears the Phosphothreonine mark. Position 434 is a phosphoserine (S434). An N6-acetyllysine modification is found at K438. S448 and S461 each carry phosphoserine. An oligomerization region spans residues 457–508 (HLTVSGDVTFGKNVSLKGTVIIIANHGDRIDIPPGAVLENKIVSGNLRILDH). Residues 502–503 (NL) form a critical for end-to-end subunit interaction region.

This sequence belongs to the UDPGP type 1 family. As to quaternary structure, homooctamer.

Its subcellular location is the cytoplasm. The enzyme catalyses alpha-D-glucose 1-phosphate + UTP + H(+) = UDP-alpha-D-glucose + diphosphate. Its pathway is glycan biosynthesis; glycogen biosynthesis. Functionally, UTP--glucose-1-phosphate uridylyltransferase catalyzing the conversion of glucose-1-phosphate into UDP-glucose, a crucial precursor for the production of glycogen. The protein is UTP--glucose-1-phosphate uridylyltransferase (UGP2) of Cricetulus griseus (Chinese hamster).